The sequence spans 351 residues: MTTVEMGIPTVRRSVSLAGRPDVDHLVDRFGRVARDLRVSITEKCSLRCTYCMPEEGLPAIPAQNLLTASEIVRLVDIAVHRLGVREVRFTGGEPLMRVDLEQMIAGCAERVPGVPLAMTTNAVGLEHRADGLARAGLTRVNVSLDSVDREHFARLTRRDRLPSVMAGIRAAARAGLAPMKINAVLMPETLSGAADLLEWCLREGVTLRFIEEMPLDADHEWARENMVTADRLLAVLGERFTLTEHGREDPSAPAEEWLVDGGPATVGIIASVTRSFCSDCDRTRLTAEGTVRSCLFSDQEIDLRSALRSGADDEELAQLWRGAMWNKWAGHGINADGFAPPQRSMGAIGG.

In terms of domain architecture, Radical SAM core spans 29 to 254; that stretch reads RFGRVARDLR…EHGREDPSAP (226 aa). Arg38 contributes to the GTP binding site. Positions 45 and 49 each coordinate [4Fe-4S] cluster. Position 51 (Tyr51) interacts with S-adenosyl-L-methionine. Residue Cys52 participates in [4Fe-4S] cluster binding. Arg89 contributes to the GTP binding site. Residue Gly93 participates in S-adenosyl-L-methionine binding. Thr120 is a GTP binding site. An S-adenosyl-L-methionine-binding site is contributed by Ser144. Position 181 (Lys181) interacts with GTP. Residue Met214 coordinates S-adenosyl-L-methionine. 2 residues coordinate [4Fe-4S] cluster: Cys278 and Cys281. Residue 283-285 coordinates GTP; that stretch reads RTR. Cys295 lines the [4Fe-4S] cluster pocket.

It belongs to the radical SAM superfamily. MoaA family. In terms of assembly, monomer and homodimer. [4Fe-4S] cluster is required as a cofactor.

The catalysed reaction is GTP + AH2 + S-adenosyl-L-methionine = (8S)-3',8-cyclo-7,8-dihydroguanosine 5'-triphosphate + 5'-deoxyadenosine + L-methionine + A + H(+). It participates in cofactor biosynthesis; molybdopterin biosynthesis. Its function is as follows. Catalyzes the cyclization of GTP to (8S)-3',8-cyclo-7,8-dihydroguanosine 5'-triphosphate. The sequence is that of GTP 3',8-cyclase from Rhodococcus opacus (strain B4).